A 289-amino-acid polypeptide reads, in one-letter code: Aquaporin PIP1-2 (289 aa).

Residues 1-36 (MEGKEEDVRLGANKFSERQPIGTAAQGAADDKDYKE) are disordered. The next 2 helical transmembrane spans lie at 58–78 (IAEF…VMGV) and 93–115 (IAWS…SGGH). Residues 117-119 (NPA) carry the NPA 1 motif. 3 helical membrane passes run 136 to 156 (LFYI…VKGF), 178 to 198 (GDGL…VFSA), and 212 to 232 (ILAP…TIPI). The NPA 2 signature appears at 238 to 240 (NPA). Residues 260-280 (IFWVGPFIGAALAAIYHQVII) form a helical membrane-spanning segment.

Belongs to the MIP/aquaporin (TC 1.A.8) family. PIP (TC 1.A.8.11) subfamily. Interacts with PIP2-1 to form heteromers. In terms of tissue distribution, highly expressed in developing tassels and at lower levels in roots, shoots, ears and embryos. Expressed in the root growing zone at 5-6 mm from the root tip. Expressed in xylem parenchyma.

Its subcellular location is the cell membrane. Functionally, water channel required to facilitate the transport of water across cell membrane. Active as heteromers with PIP1-1, PIP2-1, PIP2-4 or PIP2-5, but not as homomers. This is Aquaporin PIP1-2 (PIP1-2) from Zea mays (Maize).